Here is a 206-residue protein sequence, read N- to C-terminus: Large ribosomal subunit protein uL4 (206 aa).

The tract at residues 63 to 97 (MYKQKGTGRARHHSARAPQFRGGGKAHGPVVRSHE) is disordered. Over residues 64 to 77 (YKQKGTGRARHHSA) the composition is skewed to basic residues.

The protein belongs to the universal ribosomal protein uL4 family. As to quaternary structure, part of the 50S ribosomal subunit.

Functionally, one of the primary rRNA binding proteins, this protein initially binds near the 5'-end of the 23S rRNA. It is important during the early stages of 50S assembly. It makes multiple contacts with different domains of the 23S rRNA in the assembled 50S subunit and ribosome. Forms part of the polypeptide exit tunnel. The polypeptide is Large ribosomal subunit protein uL4 (Rhizobium johnstonii (strain DSM 114642 / LMG 32736 / 3841) (Rhizobium leguminosarum bv. viciae)).